The following is a 442-amino-acid chain: 23S rRNA (uracil(1939)-C(5))-methyltransferase RlmD (442 aa).

The TRAM domain maps to 10-75 (AKQTAKNCCK…RQYGRAKANK (66 aa)). [4Fe-4S] cluster contacts are provided by C88, C94, C97, and C173. Residues Q276, F305, N310, E326, N353, and D374 each coordinate S-adenosyl-L-methionine. The Nucleophile role is filled by C400.

Belongs to the class I-like SAM-binding methyltransferase superfamily. RNA M5U methyltransferase family. RlmD subfamily.

It carries out the reaction uridine(1939) in 23S rRNA + S-adenosyl-L-methionine = 5-methyluridine(1939) in 23S rRNA + S-adenosyl-L-homocysteine + H(+). Catalyzes the formation of 5-methyl-uridine at position 1939 (m5U1939) in 23S rRNA. The protein is 23S rRNA (uracil(1939)-C(5))-methyltransferase RlmD of Haemophilus ducreyi (strain 35000HP / ATCC 700724).